Consider the following 62-residue polypeptide: Alpha-elapitoxin-Pc1 (62 aa).

4 disulfide bridges follow: cysteine 3–cysteine 24, cysteine 17–cysteine 41, cysteine 43–cysteine 54, and cysteine 55–cysteine 60.

It belongs to the three-finger toxin family. Short-chain subfamily. Type I alpha-neurotoxin sub-subfamily. As to expression, expressed by the venom gland.

It is found in the secreted. In terms of biological role, bird-specific neurotoxin (tested on chicken) that acts as pseudo-irreversible antagonists at the nicotinic acetylcholine receptor (nAChR) of the skeletal neuromuscular junction. Has no significant effect on the electrically-induced twitches of the rat isolated phrenic nerve-diaphragm preparation. The polypeptide is Alpha-elapitoxin-Pc1 (Pseudechis colletti (Collett's snake)).